The sequence spans 393 residues: S-adenosylmethionine synthase (393 aa).

Histidine 16 serves as a coordination point for ATP. Aspartate 18 contacts Mg(2+). Glutamate 44 lines the K(+) pocket. L-methionine contacts are provided by glutamate 57 and glutamine 100. The interval glutamine 100–histidine 110 is flexible loop. ATP contacts are provided by residues aspartate 167 to lysine 169, arginine 238 to phenylalanine 239, aspartate 247, arginine 253 to lysine 254, alanine 270, and lysine 274. Aspartate 247 contributes to the L-methionine binding site. Lysine 278 contacts L-methionine.

This sequence belongs to the AdoMet synthase family. Homotetramer; dimer of dimers. It depends on Mg(2+) as a cofactor. K(+) serves as cofactor.

The protein resides in the cytoplasm. It carries out the reaction L-methionine + ATP + H2O = S-adenosyl-L-methionine + phosphate + diphosphate. The protein operates within amino-acid biosynthesis; S-adenosyl-L-methionine biosynthesis; S-adenosyl-L-methionine from L-methionine: step 1/1. Its function is as follows. Catalyzes the formation of S-adenosylmethionine (AdoMet) from methionine and ATP. The overall synthetic reaction is composed of two sequential steps, AdoMet formation and the subsequent tripolyphosphate hydrolysis which occurs prior to release of AdoMet from the enzyme. The sequence is that of S-adenosylmethionine synthase from Leptothrix cholodnii (strain ATCC 51168 / LMG 8142 / SP-6) (Leptothrix discophora (strain SP-6)).